The primary structure comprises 445 residues: Exodeoxyribonuclease 7 large subunit (445 aa).

This sequence belongs to the XseA family. In terms of assembly, heterooligomer composed of large and small subunits.

It is found in the cytoplasm. It catalyses the reaction Exonucleolytic cleavage in either 5'- to 3'- or 3'- to 5'-direction to yield nucleoside 5'-phosphates.. Functionally, bidirectionally degrades single-stranded DNA into large acid-insoluble oligonucleotides, which are then degraded further into small acid-soluble oligonucleotides. The chain is Exodeoxyribonuclease 7 large subunit from Nautilia profundicola (strain ATCC BAA-1463 / DSM 18972 / AmH).